The chain runs to 78 residues: Large ribosomal subunit protein bL28 (78 aa).

It belongs to the bacterial ribosomal protein bL28 family.

The chain is Large ribosomal subunit protein bL28 from Flavobacterium psychrophilum (strain ATCC 49511 / DSM 21280 / CIP 103535 / JIP02/86).